The following is a 350-amino-acid chain: Galactokinase (350 aa).

Residue 14 to 17 (EHTD) coordinates substrate. Residues Ser46 and 96-102 (GAGLSSS) contribute to the ATP site. Ser102 and Glu134 together coordinate Mg(2+). Asp146 (proton acceptor) is an active-site residue. Tyr196 contacts substrate.

Belongs to the GHMP kinase family. GalK subfamily.

The protein resides in the cytoplasm. It catalyses the reaction alpha-D-galactose + ATP = alpha-D-galactose 1-phosphate + ADP + H(+). The protein operates within carbohydrate metabolism; galactose metabolism. In terms of biological role, catalyzes the transfer of the gamma-phosphate of ATP to D-galactose to form alpha-D-galactose-1-phosphate (Gal-1-P). The sequence is that of Galactokinase from Thermotoga maritima (strain ATCC 43589 / DSM 3109 / JCM 10099 / NBRC 100826 / MSB8).